The primary structure comprises 247 residues: Fibroblast growth factor 14 (247 aa).

2 disordered regions span residues M1 to G38 and V214 to T247. A compositionally biased stretch (basic and acidic residues) spans Q15–S25.

This sequence belongs to the heparin-binding growth factors family. As to quaternary structure, interacts with SCN8A. In terms of tissue distribution, nervous system.

It localises to the nucleus. Its function is as follows. Probably involved in nervous system development and function. The chain is Fibroblast growth factor 14 (FGF14) from Homo sapiens (Human).